A 186-amino-acid chain; its full sequence is Ribosome-recycling factor (186 aa).

Belongs to the RRF family.

The protein resides in the cytoplasm. In terms of biological role, responsible for the release of ribosomes from messenger RNA at the termination of protein biosynthesis. May increase the efficiency of translation by recycling ribosomes from one round of translation to another. This chain is Ribosome-recycling factor, found in Rubrobacter xylanophilus (strain DSM 9941 / JCM 11954 / NBRC 16129 / PRD-1).